The sequence spans 99 residues: Nucleoid-associated protein LACR_0106 (99 aa).

The protein belongs to the YbaB/EbfC family. As to quaternary structure, homodimer.

The protein resides in the cytoplasm. Its subcellular location is the nucleoid. Binds to DNA and alters its conformation. May be involved in regulation of gene expression, nucleoid organization and DNA protection. This chain is Nucleoid-associated protein LACR_0106, found in Lactococcus lactis subsp. cremoris (strain SK11).